The sequence spans 207 residues: Guanylate kinase (207 aa).

Positions 4-184 (GTLYIVSAPS…ALMDFKAIIR (181 aa)) constitute a Guanylate kinase-like domain. 11-18 (APSGAGKS) is an ATP binding site.

This sequence belongs to the guanylate kinase family.

The protein localises to the cytoplasm. The catalysed reaction is GMP + ATP = GDP + ADP. It catalyses the reaction dZMP + ATP = dZDP + ADP. It participates in purine metabolism. Essential for recycling GMP and indirectly, cGMP. Its function is as follows. (Microbial infection) Catalyzes the phosphorylation of dZMP to dZDP, when the bacterium is infected by a phage that produces the substrate for the synthesis of dZTP (2- amino-2'-deoxyadenosine 5'-triphosphate), which is then used by the phage as a DNA polymerase substrate. This is Guanylate kinase (gmk) from Vibrio cholerae serotype O1 (strain ATCC 39315 / El Tor Inaba N16961).